The sequence spans 417 residues: Actin-related protein 10 (417 aa).

Belongs to the actin family. Subunit of dynactin, a multiprotein complex part of a tripartite complex with dynein and a adapter, such as BICDL1, BICD2 or HOOK3. The dynactin complex is built around ACTR1A/ACTB filament and consists of an actin-related filament composed of a shoulder domain, a pointed end and a barbed end. Its length is defined by its flexible shoulder domain. The soulder is composed of 2 DCTN1 subunits, 4 DCTN2 and 2 DCTN3. The 4 DCNT2 (via N-terminus) bind the ACTR1A filament and act as molecular rulers to determine the length. The pointed end is important for binding dynein-dynactin cargo adapters. Consists of 4 subunits: ACTR10, DCNT4, DCTN5 and DCTN6. The barbed end is composed of a CAPZA1:CAPZB heterodimers, which binds ACTR1A/ACTB filament and dynactin and stabilizes dynactin.

It is found in the cytoplasm. The protein resides in the cytoskeleton. Its function is as follows. Part of the dynactin complex that activates the molecular motor dynein for ultra-processive transport along microtubules. This is Actin-related protein 10 (Actr10) from Mus musculus (Mouse).